Reading from the N-terminus, the 127-residue chain is Small ribosomal subunit protein uS11 (127 aa).

Belongs to the universal ribosomal protein uS11 family. In terms of assembly, part of the 30S ribosomal subunit. Interacts with proteins S7 and S18. Binds to IF-3.

In terms of biological role, located on the platform of the 30S subunit, it bridges several disparate RNA helices of the 16S rRNA. Forms part of the Shine-Dalgarno cleft in the 70S ribosome. The sequence is that of Small ribosomal subunit protein uS11 from Prosthecochloris aestuarii (strain DSM 271 / SK 413).